The sequence spans 190 residues: Glutamyl-tRNA(Gln) amidotransferase subunit F, mitochondrial (190 aa).

The protein belongs to the GatF family. As to quaternary structure, subunit of the heterotrimeric GatFAB amidotransferase (AdT) complex, composed of A, B and F subunits.

The protein localises to the mitochondrion inner membrane. It catalyses the reaction L-glutamyl-tRNA(Gln) + L-glutamine + ATP + H2O = L-glutaminyl-tRNA(Gln) + L-glutamate + ADP + phosphate + H(+). Functionally, allows the formation of correctly charged Gln-tRNA(Gln) through the transamidation of misacylated Glu-tRNA(Gln) in the mitochondria. The reaction takes place in the presence of glutamine and ATP through an activated gamma-phospho-Glu-tRNA(Gln). Required for proper protein synthesis within the mitochondrion. The polypeptide is Glutamyl-tRNA(Gln) amidotransferase subunit F, mitochondrial (Eremothecium gossypii (strain ATCC 10895 / CBS 109.51 / FGSC 9923 / NRRL Y-1056) (Yeast)).